A 309-amino-acid polypeptide reads, in one-letter code: Porphobilinogen deaminase (309 aa).

At C240 the chain carries S-(dipyrrolylmethanemethyl)cysteine.

The protein belongs to the HMBS family. Monomer. Dipyrromethane is required as a cofactor.

It carries out the reaction 4 porphobilinogen + H2O = hydroxymethylbilane + 4 NH4(+). The protein operates within porphyrin-containing compound metabolism; protoporphyrin-IX biosynthesis; coproporphyrinogen-III from 5-aminolevulinate: step 2/4. Its function is as follows. Tetrapolymerization of the monopyrrole PBG into the hydroxymethylbilane pre-uroporphyrinogen in several discrete steps. The sequence is that of Porphobilinogen deaminase from Brevibacillus brevis (strain 47 / JCM 6285 / NBRC 100599).